Here is a 303-residue protein sequence, read N- to C-terminus: 4-diphosphocytidyl-2-C-methyl-D-erythritol kinase (303 aa).

Residue Lys24 is part of the active site. An ATP-binding site is contributed by 111–121; it reads PIASGIGGGSA. Residue Asp153 is part of the active site.

It belongs to the GHMP kinase family. IspE subfamily.

It carries out the reaction 4-CDP-2-C-methyl-D-erythritol + ATP = 4-CDP-2-C-methyl-D-erythritol 2-phosphate + ADP + H(+). The protein operates within isoprenoid biosynthesis; isopentenyl diphosphate biosynthesis via DXP pathway; isopentenyl diphosphate from 1-deoxy-D-xylulose 5-phosphate: step 3/6. In terms of biological role, catalyzes the phosphorylation of the position 2 hydroxy group of 4-diphosphocytidyl-2C-methyl-D-erythritol. In Rhizobium johnstonii (strain DSM 114642 / LMG 32736 / 3841) (Rhizobium leguminosarum bv. viciae), this protein is 4-diphosphocytidyl-2-C-methyl-D-erythritol kinase.